Reading from the N-terminus, the 374-residue chain is Phosphate acyltransferase (374 aa).

The tract at residues 323 to 374 (AEMVDPREPESNPRRRTRPLQVYSGSGPEVLPLGSLERTSSRCPEPVEDAQP) is disordered. A compositionally biased stretch (basic and acidic residues) spans 326–335 (VDPREPESNP).

The protein belongs to the PlsX family. In terms of assembly, homodimer. Probably interacts with PlsY.

It localises to the cytoplasm. It carries out the reaction a fatty acyl-[ACP] + phosphate = an acyl phosphate + holo-[ACP]. Its pathway is lipid metabolism; phospholipid metabolism. In terms of biological role, catalyzes the reversible formation of acyl-phosphate (acyl-PO(4)) from acyl-[acyl-carrier-protein] (acyl-ACP). This enzyme utilizes acyl-ACP as fatty acyl donor, but not acyl-CoA. The polypeptide is Phosphate acyltransferase (Synechococcus sp. (strain JA-2-3B'a(2-13)) (Cyanobacteria bacterium Yellowstone B-Prime)).